The primary structure comprises 274 residues: Putative 2-succinyl-6-hydroxy-2,4-cyclohexadiene-1-carboxylate synthase (274 aa).

In terms of domain architecture, AB hydrolase-1 spans 26–259; sequence AVVCLHGFTG…KAGHTVHVEQ (234 aa).

It belongs to the AB hydrolase superfamily. MenH family. As to quaternary structure, monomer.

It carries out the reaction 5-enolpyruvoyl-6-hydroxy-2-succinyl-cyclohex-3-ene-1-carboxylate = (1R,6R)-6-hydroxy-2-succinyl-cyclohexa-2,4-diene-1-carboxylate + pyruvate. Its pathway is quinol/quinone metabolism; 1,4-dihydroxy-2-naphthoate biosynthesis; 1,4-dihydroxy-2-naphthoate from chorismate: step 3/7. The protein operates within quinol/quinone metabolism; menaquinone biosynthesis. Its function is as follows. Catalyzes a proton abstraction reaction that results in 2,5-elimination of pyruvate from 2-succinyl-5-enolpyruvyl-6-hydroxy-3-cyclohexene-1-carboxylate (SEPHCHC) and the formation of 2-succinyl-6-hydroxy-2,4-cyclohexadiene-1-carboxylate (SHCHC). The chain is Putative 2-succinyl-6-hydroxy-2,4-cyclohexadiene-1-carboxylate synthase from Bacillus subtilis (strain 168).